A 213-amino-acid chain; its full sequence is Redox-sensing transcriptional repressor Rex (213 aa).

Residues Leu18–Phe57 constitute a DNA-binding region (H-T-H motif). Gly92 to Gly97 is a binding site for NAD(+).

The protein belongs to the transcriptional regulatory Rex family. Homodimer.

The protein localises to the cytoplasm. In terms of biological role, modulates transcription in response to changes in cellular NADH/NAD(+) redox state. Binds to the promoter of the aldehyde-alcohol dehydrogenase adhE gene. Functions as a redox-dependent repressor of adhE expression. This is Redox-sensing transcriptional repressor Rex from Streptococcus pneumoniae serotype 19F (strain G54).